The following is a 207-amino-acid chain: MIATEEQARAFVAERCDAAGMERIEALVAALRSENERQNLVSKGSLGEVWQRHIADSAQLLDHVSRETGLWLDLGSGAGFPGLVVAAMQPEKPVLLVESRRKRVEWLTDMVKALKLENCDVAGMRLELLEAREAGVISARAFAPLEKLLRLSARFSTDTTTWVLPKGRSAAQELQGVSRKWQKLFHVEQSVTSEEAAILVGRGRAKT.

S-adenosyl-L-methionine-binding positions include glycine 75, phenylalanine 80, 126–127 (LE), and arginine 140.

This sequence belongs to the methyltransferase superfamily. RNA methyltransferase RsmG family.

The protein resides in the cytoplasm. The catalysed reaction is guanosine(527) in 16S rRNA + S-adenosyl-L-methionine = N(7)-methylguanosine(527) in 16S rRNA + S-adenosyl-L-homocysteine. In terms of biological role, specifically methylates the N7 position of guanine in position 527 of 16S rRNA. The polypeptide is Ribosomal RNA small subunit methyltransferase G (Erythrobacter litoralis (strain HTCC2594)).